The following is a 545-amino-acid chain: MAKDILFSEEARRAMLRGVDALADAVKVTIGPKGRNVVLERKFGSPLITNDGVTIAKEIELEDHFENMGAKLVAEVASKTNEIAGDGTTTATVLAQAMIREGLKNVTAGANPMVIRKGIEKAVRRAVEELHAIAKPIEGKEAIAQVAAISAADEEVGQLIAEAMERVGQDGVITIEESRGFTTELDVVEGMQFDRGYASPYMITDSDKMEAVLENPYILITDKKISNIQEILPVLEQVVQQNKPLLIIAEDVEGEALATLVVNKLRGTFNAVAVKAPGFGDRRKAMLEDISIVTGAELITEELGLDLKETQITQLGRASKVVVSKDNTTIVEGNGHSDSITARVGAIRSQIEETTSDFDREKLQERLAKLAGGVAVVKVGAATETELKERKLRIEDALNATRAAVEEGIVAGGGTAFIHVTKAVESILAVTTGDEATGVNIVLRALEAPLRQIAENAGQEGSVIVERLKHEAQGMGYNAATDEYVDMIETGIVDPAKVTRSALQNAASVSAMFLTTEAVIADKPEPAGAPAMPDMGGMGGMGGMM.

ATP is bound by residues threonine 29–proline 32, aspartate 86–threonine 90, glycine 413, asparagine 478–alanine 480, and aspartate 494.

The protein belongs to the chaperonin (HSP60) family. Forms a cylinder of 14 subunits composed of two heptameric rings stacked back-to-back. Interacts with the co-chaperonin GroES.

The protein resides in the cytoplasm. It catalyses the reaction ATP + H2O + a folded polypeptide = ADP + phosphate + an unfolded polypeptide.. Its function is as follows. Together with its co-chaperonin GroES, plays an essential role in assisting protein folding. The GroEL-GroES system forms a nano-cage that allows encapsulation of the non-native substrate proteins and provides a physical environment optimized to promote and accelerate protein folding. The polypeptide is Chaperonin GroEL (Exiguobacterium sibiricum (strain DSM 17290 / CCUG 55495 / CIP 109462 / JCM 13490 / 255-15)).